We begin with the raw amino-acid sequence, 491 residues long: NADPH:adrenodoxin oxidoreductase, mitochondrial (491 aa).

The transit peptide at 1 to 32 directs the protein to the mitochondrion; that stretch reads MASRCWRWWGWSAWPRTRLPPAGSTPSFCHHF. 4 residues coordinate FAD: A49, E69, L77, and V113. NADP(+) is bound by residues 184-187, 228-229, and E240; these read QGNV and RR. A phosphoserine mark is found at S310 and S317. FAD contacts are provided by residues W398 and 405–407; that span reads GVI. G405 is a binding site for NADP(+).

This sequence belongs to the ferredoxin--NADP reductase type 1 family. As to quaternary structure, monomer. Interacts directly with FDX1. The cofactor is FAD.

The protein resides in the mitochondrion. The protein localises to the mitochondrion inner membrane. The catalysed reaction is 2 reduced [adrenodoxin] + NADP(+) + H(+) = 2 oxidized [adrenodoxin] + NADPH. It catalyses the reaction 2 reduced [2Fe-2S]-[ferredoxin] + NADP(+) + H(+) = 2 oxidized [2Fe-2S]-[ferredoxin] + NADPH. The protein operates within steroid metabolism; cholesterol metabolism. In terms of biological role, serves as the first electron transfer protein in all the mitochondrial P450 systems including cholesterol side chain cleavage in all steroidogenic tissues, steroid 11-beta hydroxylation in the adrenal cortex, 25-OH-vitamin D3-24 hydroxylation in the kidney, and sterol C-27 hydroxylation in the liver. Also acts as a ferredoxin--NADP(+) reductase essential for coenzyme Q biosynthesis: together with FDX2, transfers the electrons required for the hydroxylation reaction performed by COQ6. In Homo sapiens (Human), this protein is NADPH:adrenodoxin oxidoreductase, mitochondrial.